The following is a 250-amino-acid chain: Type III pantothenate kinase (250 aa).

Residue 6-13 (DVGNTNTV) coordinates ATP. Residue 103–106 (GADR) coordinates substrate. Catalysis depends on Asp105, which acts as the Proton acceptor. Asp125 contacts K(+). Thr128 contributes to the ATP binding site. Thr180 is a substrate binding site.

This sequence belongs to the type III pantothenate kinase family. Homodimer. NH4(+) is required as a cofactor. It depends on K(+) as a cofactor.

It localises to the cytoplasm. The catalysed reaction is (R)-pantothenate + ATP = (R)-4'-phosphopantothenate + ADP + H(+). Its pathway is cofactor biosynthesis; coenzyme A biosynthesis; CoA from (R)-pantothenate: step 1/5. Catalyzes the phosphorylation of pantothenate (Pan), the first step in CoA biosynthesis. The chain is Type III pantothenate kinase from Frankia alni (strain DSM 45986 / CECT 9034 / ACN14a).